We begin with the raw amino-acid sequence, 23 residues long: Conolysin-Mt1 (23 aa).

Residue S22 is modified to Serine amide.

As to expression, expressed by the venom duct.

The protein localises to the secreted. This cytolytic peptide has ability to disrupt the integrity of cell membranes from both prokaryotes and eukaryotes. It permeabilizes both negatively charged prokaryotic (PE:PG) and zwitterionic eukaryotic (PC:cholesterol) model membranes. It has potent hemolytic activity on human erythrocytes and exhibits low antimicrobial activity against the Gram-negative bacterium E.coli (MIC&gt;50 uM) and the Gram-positive bacterium S.aureus (MIC=25-50 uM). Intracranial injection causes mice to shuffle backward until the encounter an obstacle, at which time the mouse jump into the air. The backward shuffle is reminiscent to the signature dance 'moonwalk' that gained widespread popularity after being performed by Michael Jackson. The polypeptide is Conolysin-Mt1 (Conus mustelinus (Weasel cone)).